The sequence spans 134 residues: Small ribosomal subunit protein uS11 (134 aa).

Residues 1 to 21 (MPPKSRQGAGRKVRRKEKKNV) are disordered. The segment covering 9–21 (AGRKVRRKEKKNV) has biased composition (basic residues).

This sequence belongs to the universal ribosomal protein uS11 family. As to quaternary structure, part of the 30S ribosomal subunit. Interacts with proteins S7 and S18. Binds to IF-3.

Its function is as follows. Located on the platform of the 30S subunit, it bridges several disparate RNA helices of the 16S rRNA. Forms part of the Shine-Dalgarno cleft in the 70S ribosome. The sequence is that of Small ribosomal subunit protein uS11 from Thermobifida fusca (strain YX).